An 852-amino-acid chain; its full sequence is DNA mismatch repair protein MutS (852 aa).

602–609 provides a ligand contact to ATP; that stretch reads GPNMSGKS.

It belongs to the DNA mismatch repair MutS family.

In terms of biological role, this protein is involved in the repair of mismatches in DNA. It is possible that it carries out the mismatch recognition step. This protein has a weak ATPase activity. The chain is DNA mismatch repair protein MutS from Streptococcus thermophilus (strain ATCC BAA-250 / LMG 18311).